The sequence spans 377 residues: 23S rRNA (uracil(747)-C(5))-methyltransferase RlmC (377 aa).

Residues Cys-3, Cys-11, Cys-14, and Cys-87 each contribute to the [4Fe-4S] cluster site. Positions 212, 241, 262, and 307 each coordinate S-adenosyl-L-methionine. The Nucleophile role is filled by Cys-334.

Belongs to the class I-like SAM-binding methyltransferase superfamily. RNA M5U methyltransferase family. RlmC subfamily.

The enzyme catalyses uridine(747) in 23S rRNA + S-adenosyl-L-methionine = 5-methyluridine(747) in 23S rRNA + S-adenosyl-L-homocysteine + H(+). Catalyzes the formation of 5-methyl-uridine at position 747 (m5U747) in 23S rRNA. The sequence is that of 23S rRNA (uracil(747)-C(5))-methyltransferase RlmC from Proteus mirabilis (strain HI4320).